A 246-amino-acid polypeptide reads, in one-letter code: Chaperone protein SefB (246 aa).

Residues 1–24 (MYILNKFIRRTVIFFFFCYLPIAS) form the signal peptide. The cysteines at positions 124 and 155 are disulfide-linked.

The protein belongs to the periplasmic pilus chaperone family.

The protein localises to the periplasm. Required for the biogenesis of the SefA (SEF14) fimbria. The polypeptide is Chaperone protein SefB (sefB) (Salmonella enteritidis).